The following is a 367-amino-acid chain: AdoMet-dependent heme synthase (367 aa).

The Radical SAM core domain occupies 15–238 (DGSPTCKLIA…TSMHLKATCA (224 aa)). Cys31, Cys35, and Cys38 together coordinate [4Fe-4S] cluster.

This sequence belongs to the radical SAM superfamily. The cofactor is [4Fe-4S] cluster.

It catalyses the reaction Fe-coproporphyrin III + 2 S-adenosyl-L-methionine = heme b + 2 5'-deoxyadenosine + 2 L-methionine + 2 CO2. It functions in the pathway porphyrin-containing compound metabolism; protoheme biosynthesis. Its function is as follows. Involved in siroheme-dependent heme b biosynthesis. Catalyzes the conversion of Fe-coproporphyrin III into heme by the oxidative decarboxylation of two propionate side chains. This chain is AdoMet-dependent heme synthase, found in Nitratidesulfovibrio vulgaris (strain ATCC 29579 / DSM 644 / CCUG 34227 / NCIMB 8303 / VKM B-1760 / Hildenborough) (Desulfovibrio vulgaris).